The primary structure comprises 613 residues: Ribosome-associated molecular chaperone SSB1 (613 aa).

Positions 1-391 (MAEGVFQGAI…ILTGQSTSED (391 aa)) are nucleotide binding domain (NBD). ATP contacts are provided by residues 16–18 (TTY), lysine 73, 205–207 (GGT), 271–278 (ERAKRTLS), and glycine 342. The segment at 392-402 (TKDLLLLDVAP) is inter-domain linker. The interval 403 to 613 (LSLGVGMQGD…RVVTKAMSSR (211 aa)) is substrate binding domain (SBD). The lid domain (SBDalpha) stretch occupies residues 516–612 (SDEIEKMVNQ…KRVVTKAMSS (97 aa)). Residues 574–582 (IESALSDAL) carry the Nuclear export signal motif.

The protein belongs to the heat shock protein 70 family. Ssb-type Hsp70 subfamily. Binds to ribosomes. Binds close to the ribosomal tunnel exit via contacts with both ribosomal proteins and rRNA. Directly interacts with nascent polypeptides. This interaction is dependent on the ribosome-associated complex (RAC). Interacts with SSE1. Interacts with FES1.

It is found in the cytoplasm. It carries out the reaction ATP + H2O = ADP + phosphate + H(+). Functionally, ribosome-bound, Hsp70-type chaperone that assists in the cotranslational folding of newly synthesized proteins in the cytosol. Stimulates folding by interacting with nascent chains, binding to short, largely hydrophobic sequences exposed by unfolded proteins, thereby stabilizing longer, more slowly translated, and aggregation-prone nascent polypeptides and domains that cannot fold stably until fully synthesized. The Hsp70-protein substrate interaction depends on ATP-binding and on allosteric regulation between the NBD and the SBD. The ATP-bound state is characterized by a fast exchange rate of substrate (low affinity state), while in the ADP-bound state exchange is much slower (high affinity state). During the Hsp70 cycle, the chaperone switches between the ATP-bound state (open conformation) and the ADP-bound state (closed conformation) by major conformational rearrangements involving mainly the lid domain. Ssb cooperates with a specific Hsp40/Hsp70 co-chaperone termed the ribosome-associated complex (RAC), which stimulates the ATPase activity of the ribosome-associated pool of Ssbs and switches it to the high affinity substrate binding state. Hsp110 chaperone SSE1 and FES1 act as nucleotide exchange factors that cause substrate release. This is Ribosome-associated molecular chaperone SSB1 (SSB1) from Zygosaccharomyces rouxii (strain ATCC 2623 / CBS 732 / NBRC 1130 / NCYC 568 / NRRL Y-229).